A 356-amino-acid polypeptide reads, in one-letter code: Golgi-resident adenosine 3',5'-bisphosphate 3'-phosphatase (356 aa).

M1 is modified (N-acetylmethionine). The Cytoplasmic segment spans residues 1–12 (MAPMGIRLSPLG). Residues 13 to 33 (VAVFFLLGLGVLYHLYSGFLA) traverse the membrane as a helical segment. Residues 34 to 356 (GRFSLFGLGG…KLPDLEKSGH (323 aa)) are Lumenal-facing. The disordered stretch occupies residues 82–104 (VRESNVLHEKSKGKTREGAEDKM). Residue D108 is the Proton acceptor of the active site. The Mg(2+) site is built by E131, D172, L174, and D175. T177 acts as the Proton acceptor in catalysis. The AMP site is built by S240 and H243. N257 carries N-linked (GlcNAc...) asparagine glycosylation. Residues G266 and K270 each coordinate AMP. D298 is a Mg(2+) binding site.

It belongs to the inositol monophosphatase superfamily. Mg(2+) serves as cofactor. Contains N-linked glycan resistant to endoglycosydase H.

The protein resides in the golgi apparatus. Its subcellular location is the trans-Golgi network membrane. It catalyses the reaction adenosine 3',5'-bisphosphate + H2O = AMP + phosphate. It functions in the pathway sulfur metabolism. Strongly inhibited by lithium. Functionally, exhibits 3'-nucleotidase activity toward adenosine 3',5'-bisphosphate (PAP), namely hydrolyzes adenosine 3',5'-bisphosphate into adenosine 5'-monophosphate (AMP) and a phosphate. May play a role in the formation of skeletal elements derived through endochondral ossification, possibly by clearing adenosine 3',5'-bisphosphate produced by Golgi sulfotransferases during glycosaminoglycan sulfation. Has no activity toward 3'-phosphoadenosine 5'-phosphosulfate (PAPS) or inositol phosphate (IP) substrates including I(1)P, I(1,4)P2, I(1,3,4)P3, I(1,4,5)P3 and I(1,3,4,5)P4. This chain is Golgi-resident adenosine 3',5'-bisphosphate 3'-phosphatase (Bpnt2), found in Rattus norvegicus (Rat).